An 828-amino-acid chain; its full sequence is Beta-galactosidase (828 aa).

The first 20 residues, M1–G20, serve as a signal peptide directing secretion. 2 N-linked (GlcNAc...) asparagine glycosylation sites follow: N23 and N153. E183 acts as the Proton donor in catalysis. Residue E252 is the Nucleophile of the active site. N-linked (GlcNAc...) asparagine glycosylation is found at N253, N350, N379, N492, N667, N799, and N803. In terms of domain architecture, SUEL-type lectin spans A742–C828.

The protein belongs to the glycosyl hydrolase 35 family.

The protein resides in the secreted. It localises to the extracellular space. It is found in the apoplast. It carries out the reaction Hydrolysis of terminal non-reducing beta-D-galactose residues in beta-D-galactosides.. This chain is Beta-galactosidase, found in Brassica oleracea (Wild cabbage).